The chain runs to 303 residues: Ribosomal protein L11 methyltransferase (303 aa).

Positions 146, 167, 189, and 236 each coordinate S-adenosyl-L-methionine.

The protein belongs to the methyltransferase superfamily. PrmA family.

The protein localises to the cytoplasm. It carries out the reaction L-lysyl-[protein] + 3 S-adenosyl-L-methionine = N(6),N(6),N(6)-trimethyl-L-lysyl-[protein] + 3 S-adenosyl-L-homocysteine + 3 H(+). Functionally, methylates ribosomal protein L11. The sequence is that of Ribosomal protein L11 methyltransferase from Acinetobacter baylyi (strain ATCC 33305 / BD413 / ADP1).